The chain runs to 186 residues: Peptidyl-tRNA hydrolase (186 aa).

Residue Y16 coordinates tRNA. The active-site Proton acceptor is the H21. Positions 66, 68, and 114 each coordinate tRNA.

It belongs to the PTH family. As to quaternary structure, monomer.

Its subcellular location is the cytoplasm. It catalyses the reaction an N-acyl-L-alpha-aminoacyl-tRNA + H2O = an N-acyl-L-amino acid + a tRNA + H(+). Functionally, hydrolyzes ribosome-free peptidyl-tRNAs (with 1 or more amino acids incorporated), which drop off the ribosome during protein synthesis, or as a result of ribosome stalling. Catalyzes the release of premature peptidyl moieties from peptidyl-tRNA molecules trapped in stalled 50S ribosomal subunits, and thus maintains levels of free tRNAs and 50S ribosomes. This is Peptidyl-tRNA hydrolase from Ureaplasma parvum serovar 3 (strain ATCC 700970).